Here is a 259-residue protein sequence, read N- to C-terminus: Short chain dehydrogenase ausX (259 aa).

NADP(+) contacts are provided by isoleucine 13, aspartate 59, arginine 121, tyrosine 153, lysine 157, and valine 186. The Proton acceptor role is filled by tyrosine 153. Tyrosine 153 serves as the catalytic Proton donor. The Lowers pKa of active site Tyr role is filled by lysine 157.

It belongs to the short-chain dehydrogenases/reductases (SDR) family.

The protein operates within secondary metabolite biosynthesis; terpenoid biosynthesis. Its function is as follows. Short chain dehydrogenase; part of the gene cluster A that mediates the biosynthesis of the fungal meroterpenoid acetoxydehydroaustin. The first step of the pathway is the synthesis of 3,5-dimethylorsellinic acid by the polyketide synthase ausA. 3,5-dimethylorsellinic acid is then prenylated by the polyprenyl transferase ausN. Further epoxidation by the FAD-dependent monooxygenase ausM and cyclization by the probable terpene cyclase ausL lead to the formation of protoaustinoid A. Protoaustinoid A is then oxidized to spiro-lactone preaustinoid A3 by the combined action of the FAD-binding monooxygenases ausB and ausC, and the dioxygenase ausE. Acid-catalyzed keto-rearrangement and ring contraction of the tetraketide portion of preaustinoid A3 by ausJ lead to the formation of preaustinoid A4. The aldo-keto reductase ausK, with the help of ausH, is involved in the next step by transforming preaustinoid A4 into isoaustinone which is in turn hydroxylated by the P450 monooxygenase ausI to form austinolide. The cytochrome P450 monooxygenase ausG then modifies austinolide to austinol. Austinol is further acetylated to austin by the O-acetyltransferase ausP, which spontaneously changes to dehydroaustin. The cytochrome P450 monooxygenase then converts dehydroaustin is into 7-dehydrodehydroaustin. The hydroxylation catalyzed by ausR permits the second O-acetyltransferase ausQ to add an additional acetyl group to the molecule, leading to the formation of acetoxydehydroaustin. Due to genetic rearrangements of the clusters and the subsequent loss of some enzymes, the end product of the Penicillium brasilianum austinoid biosynthesis clusters is acetoxydehydroaustin. The polypeptide is Short chain dehydrogenase ausX (Penicillium brasilianum).